Reading from the N-terminus, the 439-residue chain is F-box/FBD/LRR-repeat protein At5g56570 (439 aa).

An F-box domain is found at 35–81; that stretch reads PTELSDMPDDLIFKIFSFLPFFKEDLATRFISEYGKGLWNPDPNAIF. LRR repeat units follow at residues 155–177 and 223–246; these read CTTLKVLVLDHLNIMSVPGWFRL and VPTLRSLSIDNKRRGHVPLGSFWI. Positions 361–411 constitute an FBD domain; it reads VWEKPTVVPECLSTRLEILKWRDYEGTEHEKDMVGYILANATFLQRATFST.

The sequence is that of F-box/FBD/LRR-repeat protein At5g56570 from Arabidopsis thaliana (Mouse-ear cress).